The primary structure comprises 232 residues: Orotidine 5'-phosphate decarboxylase (232 aa).

Substrate-binding positions include aspartate 13, lysine 35, 62-71 (DLKFHDIPNT), threonine 122, arginine 182, glutamine 191, glycine 211, and arginine 212. Lysine 64 serves as the catalytic Proton donor.

It belongs to the OMP decarboxylase family. Type 1 subfamily. In terms of assembly, homodimer.

The enzyme catalyses orotidine 5'-phosphate + H(+) = UMP + CO2. Its pathway is pyrimidine metabolism; UMP biosynthesis via de novo pathway; UMP from orotate: step 2/2. Functionally, catalyzes the decarboxylation of orotidine 5'-monophosphate (OMP) to uridine 5'-monophosphate (UMP). This chain is Orotidine 5'-phosphate decarboxylase, found in Pseudomonas fluorescens (strain SBW25).